A 964-amino-acid chain; its full sequence is Phosphoenolpyruvate carboxylase (964 aa).

Ser-11 is modified (phosphoserine). Active-site residues include His-172 and Lys-600.

This sequence belongs to the PEPCase type 1 family. Homotetramer. Requires Mg(2+) as cofactor.

It is found in the cytoplasm. The enzyme catalyses oxaloacetate + phosphate = phosphoenolpyruvate + hydrogencarbonate. Its pathway is photosynthesis; C4 acid pathway. Its activity is regulated as follows. By light-reversible phosphorylation. In terms of biological role, through the carboxylation of phosphoenolpyruvate (PEP) it forms oxaloacetate, a four-carbon dicarboxylic acid source for the tricarboxylic acid cycle. This chain is Phosphoenolpyruvate carboxylase (PPC), found in Nicotiana tabacum (Common tobacco).